The sequence spans 385 residues: 1-deoxy-D-xylulose 5-phosphate reductoisomerase (385 aa).

Residues Thr11, Gly12, Ser13, Ile14, Gln39, and Asn117 each contribute to the NADPH site. Lys118 contributes to the 1-deoxy-D-xylulose 5-phosphate binding site. Glu119 contributes to the NADPH binding site. Asp143 contributes to the Mn(2+) binding site. Residues Ser144, Glu145, Ser170, and His193 each contribute to the 1-deoxy-D-xylulose 5-phosphate site. Glu145 contributes to the Mn(2+) binding site. Gly199 is an NADPH binding site. The 1-deoxy-D-xylulose 5-phosphate site is built by Ser206, Asn211, Lys212, and Glu215. Glu215 is a binding site for Mn(2+).

This sequence belongs to the DXR family. It depends on Mg(2+) as a cofactor. The cofactor is Mn(2+).

It carries out the reaction 2-C-methyl-D-erythritol 4-phosphate + NADP(+) = 1-deoxy-D-xylulose 5-phosphate + NADPH + H(+). It functions in the pathway isoprenoid biosynthesis; isopentenyl diphosphate biosynthesis via DXP pathway; isopentenyl diphosphate from 1-deoxy-D-xylulose 5-phosphate: step 1/6. Catalyzes the NADPH-dependent rearrangement and reduction of 1-deoxy-D-xylulose-5-phosphate (DXP) to 2-C-methyl-D-erythritol 4-phosphate (MEP). The polypeptide is 1-deoxy-D-xylulose 5-phosphate reductoisomerase (Thermomicrobium roseum (strain ATCC 27502 / DSM 5159 / P-2)).